The following is a 752-amino-acid chain: MSNTEELIQNSIGFLQKTFKALPVSFDSIRHEPLPSSMLHASVLNFEWEPLEKNISAIHDRDSLIDIILKRFIIDSMTNAIEDEEENNLEKGLLNSCIGLDFVYNSRFNRSNPASWGNTFFELFSTIIDLLNSPSTFLKFWPYAESRIEWFKMNTSVEPVSLGESNLISYKQPLYEKLRHWNDILAKLENNDILNTVKHYNMKYKLENFLSELLPINEESNFNRSASISALQESDNEWNRSARERESNRSSDVIFAADYNFVFYHLIICPIEFAFSDLEYKNDVDRSLSPLLDAILEIEENFYSKIKMNNRTRYSLEEALNTEYYANYDVMTPKLPVYMKHSNAMKMDRNEFWANLQNIKESDDYTLRPTIMDISLSNTTCLYKQLTQEDDDYYRKQFILQLCFTTNLIRNLISSDETRNFYKSCYLRENPLSDIDFENLDEVNKKRGLNLCSYICDNRVLKFYKIKDPDFYRVIRKLMSSDEKFTTAKIDGFKEFQNFRISKEKIPPPAFDETFKKFTFIKMGNKLINNVWKIPTGLDKIEQEVKKPEGVYEAAQAKWESKISSETSGGEAKDEIIRQWQTLRFLRSRYLFDFDKVNEKTGVDGLFEEPRKVEALDDSFKEKLLYKINQEHRKKLQDAREYKIGKERKKRALEEEASFPEREQKIKSQRINSASQTEGDELKSEQTQPKGEISEENTKIKSSEVSSQDPDSGVAGEFAPQNTTAQLENPKTEDNNAATSNISNGSSTQDMK.

Ser234 bears the Phosphoserine mark. A disordered region spans residues 648–752 (RKKRALEEEA…SNGSSTQDMK (105 aa)). The span at 692–702 (EISEENTKIKS) shows a compositional bias: basic and acidic residues. Residues 720–752 (PQNTTAQLENPKTEDNNAATSNISNGSSTQDMK) are compositionally biased toward polar residues.

In terms of assembly, component of the THO complex, which is composed of HPR1, MFT1, THO2 and THP2. Together with SUB2, TEX1 and YRA1, THO forms the transcription/export (TREX) complex. THO associates with DNA and RNA in vitro.

Its subcellular location is the nucleus. Functionally, component the THO subcomplex of the TREX complex, which operates in coupling transcription elongation to mRNA export. The THO complex is recruited to transcribed genes and moves along the gene with the elongating polymerase during transcription. THO is important for stabilizing nascent RNA in the RNA polymerase II elongation complex by preventing formation of DNA:RNA hybrids behind the elongating polymerase. It functions in cotranscriptional formation of an export-competent messenger ribonucleoprotein particle (mRNP) by facilitating the loading of ATP-dependent RNA helicase SUB2 and the mRNA export factor YRA1 along the nascent mRNA. The polypeptide is THO complex subunit HPR1 (HPR1) (Saccharomyces cerevisiae (strain ATCC 204508 / S288c) (Baker's yeast)).